The sequence spans 194 residues: ATP-dependent Clp protease proteolytic subunit (194 aa).

S98 serves as the catalytic Nucleophile. H123 is an active-site residue.

The protein belongs to the peptidase S14 family. In terms of assembly, fourteen ClpP subunits assemble into 2 heptameric rings which stack back to back to give a disk-like structure with a central cavity, resembling the structure of eukaryotic proteasomes.

It is found in the cytoplasm. The enzyme catalyses Hydrolysis of proteins to small peptides in the presence of ATP and magnesium. alpha-casein is the usual test substrate. In the absence of ATP, only oligopeptides shorter than five residues are hydrolyzed (such as succinyl-Leu-Tyr-|-NHMec, and Leu-Tyr-Leu-|-Tyr-Trp, in which cleavage of the -Tyr-|-Leu- and -Tyr-|-Trp bonds also occurs).. Functionally, cleaves peptides in various proteins in a process that requires ATP hydrolysis. Has a chymotrypsin-like activity. Plays a major role in the degradation of misfolded proteins. This chain is ATP-dependent Clp protease proteolytic subunit, found in Actinobacillus succinogenes (strain ATCC 55618 / DSM 22257 / CCUG 43843 / 130Z).